The primary structure comprises 622 residues: 1-deoxy-D-xylulose-5-phosphate synthase (622 aa).

Residues His-80 and 121–123 (GHS) each bind thiamine diphosphate. Asp-152 contributes to the Mg(2+) binding site. Thiamine diphosphate-binding positions include 153-154 (GA), Asn-181, Tyr-288, and Glu-370. Residue Asn-181 coordinates Mg(2+).

The protein belongs to the transketolase family. DXPS subfamily. In terms of assembly, homodimer. Mg(2+) serves as cofactor. The cofactor is thiamine diphosphate.

The enzyme catalyses D-glyceraldehyde 3-phosphate + pyruvate + H(+) = 1-deoxy-D-xylulose 5-phosphate + CO2. It functions in the pathway metabolic intermediate biosynthesis; 1-deoxy-D-xylulose 5-phosphate biosynthesis; 1-deoxy-D-xylulose 5-phosphate from D-glyceraldehyde 3-phosphate and pyruvate: step 1/1. Catalyzes the acyloin condensation reaction between C atoms 2 and 3 of pyruvate and glyceraldehyde 3-phosphate to yield 1-deoxy-D-xylulose-5-phosphate (DXP). This chain is 1-deoxy-D-xylulose-5-phosphate synthase, found in Shewanella putrefaciens (strain CN-32 / ATCC BAA-453).